We begin with the raw amino-acid sequence, 948 residues long: MSEMVDLKKFLTELGKTQKELKNVIEQAKDIGLELKTNSKMTPEQAGKLYKYIVDGIKEQIQANKPTKNPEQDNKDDLNITATPKPLNKKVSKTPKKEETKSQPKPKKTKEKKKEAPALIAKKKGGIEIVNTFEDQTLENTPKVVSHSQIEKAKQKLQEIQKSREALSKLTQSNTNNANSTNNANNVNNAKKEISEVKKQEQEIKRHENIKRRTGFRVIKRNDETENETENSVAESKKPTQSAAAIFEDIKKEWQEKDKQEAKKAKKPSKPKATPTAKNNKSHKIDFSDARDFKGNDIYDDETDEILLFDLHEQDNLNKEEEEKEIRQNINDRVRVQRKNPWMNESGIKRQSKKKRAFRNDNSQKVIQSAISIPEEVRVYEFAQKANLNLADVIKTLFNLGLMVTKNDFLDKDSIEILAEEFHLEISVQNTLEEFEVEEVLEGVKKERPPVVTIMGHVDHGKTSLLDKIRDKRVAHTEAGGITQHIGAYMVEKNDKWVSFIDTPGHEAFSQMRNRGAQVTDIAVIVIAADDGVKQQTIEALEHAKAANVPVIFAMNKMDKPNVNPDKLKAECAELGYNPVDWGGEYEFIPVSAKTGDGIDNLLETILIQADIMELKAIEEGSARAVVLEGSVEKGRGAVATVIVQSGTLSVGDSFFAETAFGKVRTMTDDQGKSIQSLKPSMVALITGLSEVPPAGSVLIGVENDSIARLQAQKRATYLRQKALSKSTKVSFDELSEMVANKELKNIPVVIKADTQGSLEAIKNSLLELNNEEVAIQVIHSGVGGITENDLSLVSSSEHAVILGFNIRPTGNVKNKAKEYNVSIKTYTVIYALIEEMRSLLLGLMSPIIEEEHTGQAEVRETFNIPKVGTIAGCVVSDGVIARGIKARLIRDGVVIHTGEILSLKRFKDDVKEVSKGYECGIMLDNYNEIKVGDVFETYKEIHKKRTL.

Disordered regions lie at residues 61–120 (IQAN…PALI), 162–243 (KSRE…TQSA), and 255–285 (QEKD…SHKI). Over residues 68–78 (KNPEQDNKDDL) the composition is skewed to basic and acidic residues. A compositionally biased stretch (low complexity) spans 173 to 189 (SNTNNANSTNNANNVNN). Basic and acidic residues predominate over residues 190 to 207 (AKKEISEVKKQEQEIKRH). The span at 208–219 (ENIKRRTGFRVI) shows a compositional bias: basic residues. Residues 230 to 243 (ENSVAESKKPTQSA) are compositionally biased toward polar residues. Residues 447–616 (ERPPVVTIMG…LIQADIMELK (170 aa)) enclose the tr-type G domain. Positions 456–463 (GHVDHGKT) are G1. 456-463 (GHVDHGKT) contacts GTP. A G2 region spans residues 481 to 485 (GITQH). Residues 502 to 505 (DTPG) are G3. GTP is bound by residues 502–506 (DTPGH) and 556–559 (NKMD). The tract at residues 556–559 (NKMD) is G4. Residues 592–594 (SAK) form a G5 region.

It belongs to the TRAFAC class translation factor GTPase superfamily. Classic translation factor GTPase family. IF-2 subfamily.

The protein localises to the cytoplasm. One of the essential components for the initiation of protein synthesis. Protects formylmethionyl-tRNA from spontaneous hydrolysis and promotes its binding to the 30S ribosomal subunits. Also involved in the hydrolysis of GTP during the formation of the 70S ribosomal complex. The chain is Translation initiation factor IF-2 from Helicobacter pylori (strain Shi470).